Here is a 319-residue protein sequence, read N- to C-terminus: MKRRTFLAMSLALTFLPSVALADNIPVRVGYIADYWGTSITAIASEKGLWEKHGLDADTRVFTNGPIQVQALGAGSLDFGYIGPGALWLPASGKAKIVAINSVGFSDRVIAQEGFKSMADLKGKKIGVPEGTSGDMLLRLALGKAGMKLDDVQVIKMDPSTVVSAFASKQIDAAGIWYPLIGTIKEHVPGMVELAANSDFFPDKTFPSAFIARNEIVAENPEAVKRMIAVIEEAEDFRTANPEQSVDITAKFLKVDKANLETEAKNGKSLTSEELVKLTRDGSVNGWLSGMADMFVTFGKLKSPLDPKDYYLADYFTAK.

Positions Met1 to Ala22 are cleaved as a signal peptide.

Belongs to the bacterial solute-binding protein SsuA/TauA family. The complex is composed of two ATP-binding proteins (BAB2_1147), two transmembrane proteins (BAB2_1148) and a solute-binding protein (BAB2_1146).

Its subcellular location is the periplasm. Probably part of an ABC transporter complex. The protein is Putative binding protein BAB2_1146 of Brucella abortus (strain 2308).